A 297-amino-acid polypeptide reads, in one-letter code: Thiosulfate sulfurtransferase (297 aa).

The residue at position 14 (lysine 14) is an N6-acetyllysine; alternate. Lysine 14 carries the N6-succinyllysine; alternate modification. Residues 25–143 (LGPGLRVLDA…WLKEGHPVTS (119 aa)) enclose the Rhodanese 1 domain. An O-linked (GlcNAc) serine glycan is attached at serine 35. Serine 38 is subject to Phosphoserine. N6-acetyllysine; alternate is present on lysine 136. The residue at position 136 (lysine 136) is an N6-succinyllysine; alternate. Positions 144–159 (EPSRPEPAVFKATLDR) are hinge. Lysine 163 carries the post-translational modification N6-acetyllysine. Residues 173-288 (QSKRFQLVDS…WFHQAPPETR (116 aa)) enclose the Rhodanese 2 domain. N6-acetyllysine; alternate is present on lysine 175. Lysine 175 is subject to N6-succinyllysine; alternate. Arginine 187 contacts substrate. At lysine 224 the chain carries N6-acetyllysine; alternate. Lysine 224 bears the N6-succinyllysine; alternate mark. N6-acetyllysine is present on lysine 236. The residue at position 237 (lysine 237) is an N6-acetyllysine; alternate. An N6-succinyllysine; alternate modification is found at lysine 237. Cysteine 248 acts as the Cysteine persulfide intermediate in catalysis. Lysine 250 provides a ligand contact to substrate.

In terms of assembly, monomer.

It localises to the mitochondrion matrix. It catalyses the reaction thiosulfate + hydrogen cyanide = thiocyanate + sulfite + 2 H(+). Its function is as follows. Together with MRPL18, acts as a mitochondrial import factor for the cytosolic 5S rRNA. Only the nascent unfolded cytoplasmic form is able to bind to the 5S rRNA. Formation of iron-sulfur complexes and cyanide detoxification. Binds molecular oxygen and sulfur. This Cricetulus griseus (Chinese hamster) protein is Thiosulfate sulfurtransferase (TST).